The chain runs to 746 residues: Exostosin-1 (746 aa).

The Cytoplasmic portion of the chain corresponds to 1–7 (MQAKKRY). A helical; Signal-anchor for type II membrane protein membrane pass occupies residues 8-28 (FILLSAGSCLALLFYFGGLQF). Topologically, residues 29–746 (RASRSHSRRE…RKKYRDIERL (718 aa)) are lumenal. The N-linked (GlcNAc...) asparagine glycan is linked to asparagine 89. Intrachain disulfides connect cysteine 98-cysteine 103 and cysteine 109-cysteine 152. 2 residues coordinate a protein: leucine 166 and tyrosine 203. 4 residues coordinate UDP: lysine 267, lysine 269, tyrosine 271, and arginine 280. The cysteines at positions 298 and 312 are disulfide-linked. A protein is bound at residue histidine 300. UDP contacts are provided by tyrosine 319 and tyrosine 324. N-linked (GlcNAc...) asparagine glycosylation is present at asparagine 330. 2 disulfides stabilise this stretch: cysteine 334-cysteine 355 and cysteine 652-cysteine 704. Residues arginine 346 and glutamate 349 each coordinate UDP.

This sequence belongs to the glycosyltransferase 47 family. As to quaternary structure, part of the heparan sulfate polymerase, a dimeric complex composed of EXT1 and EXT2. Could also form homooligomeric complexes. Interacts with NDST1. In terms of processing, N-glycosylated.

The protein resides in the golgi apparatus membrane. Its subcellular location is the golgi apparatus. The protein localises to the cis-Golgi network membrane. It localises to the endoplasmic reticulum membrane. The catalysed reaction is 3-O-{alpha-D-GlcNAc-[(1-&gt;4)-beta-D-GlcA-(1-&gt;4)-alpha-D-GlcNAc](n)-(1-&gt;4)-beta-D-GlcA-(1-&gt;3)-beta-D-Gal-(1-&gt;3)-beta-D-Gal-(1-&gt;4)-beta-D-Xyl}-L-seryl-[protein] + UDP-alpha-D-glucuronate = 3-O-{[(1-&gt;4)-beta-D-GlcA-(1-&gt;4)-alpha-D-GlcNAc](n+1)-(1-&gt;4)-beta-D-GlcA-(1-&gt;3)-beta-D-Gal-(1-&gt;3)-beta-D-Gal-(1-&gt;4)-beta-D-Xyl}-L-seryl-[protein] + UDP + H(+). It participates in protein modification; protein glycosylation. In terms of biological role, glycosyltransferase forming with EXT2 the heterodimeric heparan sulfate polymerase which catalyzes the elongation of the heparan sulfate glycan backbone. Glycan backbone extension consists in the alternating transfer of (1-&gt;4)-beta-D-GlcA and (1-&gt;4)-alpha-D-GlcNAc residues from their respective UDP-sugar donors. Both EXT1 and EXT2 are required for the full activity of the polymerase since EXT1 bears the N-acetylglucosaminyl-proteoglycan 4-beta-glucuronosyltransferase activity within the complex while EXT2 carries the glucuronosyl-N-acetylglucosaminyl-proteoglycan 4-alpha-N-acetylglucosaminyltransferase activity. Heparan sulfate proteoglycans are ubiquitous components of the extracellular matrix and play an important role in tissue homeostasis and signaling. The polypeptide is Exostosin-1 (EXT1) (Bos taurus (Bovine)).